Consider the following 323-residue polypeptide: HPr kinase/phosphorylase (323 aa).

Active-site residues include His-146 and Lys-167. An ATP-binding site is contributed by 161–168 (GESGLGKS). Ser-168 contacts Mg(2+). Catalysis depends on Asp-185, which acts as the Proton acceptor; for phosphorylation activity. Proton donor; for dephosphorylation activity. The interval 209–218 (LEVRGLGLLD) is important for the catalytic mechanism of both phosphorylation and dephosphorylation. Mg(2+) is bound at residue Glu-210. Arg-250 is an active-site residue. An important for the catalytic mechanism of dephosphorylation region spans residues 271-276 (QVAAGR).

It belongs to the HPrK/P family. As to quaternary structure, homohexamer. Requires Mg(2+) as cofactor.

The catalysed reaction is [HPr protein]-L-serine + ATP = [HPr protein]-O-phospho-L-serine + ADP + H(+). The enzyme catalyses [HPr protein]-O-phospho-L-serine + phosphate + H(+) = [HPr protein]-L-serine + diphosphate. Functionally, catalyzes the ATP- as well as the pyrophosphate-dependent phosphorylation of a specific serine residue in HPr, a phosphocarrier protein of the phosphoenolpyruvate-dependent sugar phosphotransferase system (PTS). HprK/P also catalyzes the pyrophosphate-producing, inorganic phosphate-dependent dephosphorylation (phosphorolysis) of seryl-phosphorylated HPr (P-Ser-HPr). In Cupriavidus necator (strain ATCC 17699 / DSM 428 / KCTC 22496 / NCIMB 10442 / H16 / Stanier 337) (Ralstonia eutropha), this protein is HPr kinase/phosphorylase.